Here is a 20-residue protein sequence, read N- to C-terminus: Citrate synthase (20 aa).

Belongs to the citrate synthase family. As to quaternary structure, homodimer.

The enzyme catalyses oxaloacetate + acetyl-CoA + H2O = citrate + CoA + H(+). It functions in the pathway carbohydrate metabolism; tricarboxylic acid cycle; isocitrate from oxaloacetate: step 1/2. The chain is Citrate synthase from Populus euphratica (Euphrates poplar).